Here is a 2623-residue protein sequence, read N- to C-terminus: Probable polyketide synthase 31 (2623 aa).

A compositionally biased stretch (low complexity) spans 1-11 (MTQNIDNNNNK). Residues 1–25 (MTQNIDNNNNKLIRDRNDDDDVDRN) are disordered. Residues 27 to 461 (DGDVAVIGIG…GSNVCLILSE (435 aa)) enclose the Ketosynthase family 3 (KS3) domain. Catalysis depends on for beta-ketoacyl synthase activity residues C199, H338, and H384. The segment at 666–699 (GVSADIIIGHSLGEVSSPYCSGMIDFQTLCYLIY) is acyl/malonyl transferase. S676 functions as the For acyl/malonyl transferase activity in the catalytic mechanism. The interval 959 to 1088 (HEKIKSEGPS…GNFNLTKHNS (130 aa)) is N-terminal hotdog fold. The region spanning 959-1267 (HEKIKSEGPS…CALVSLGSNP (309 aa)) is the PKS/mFAS DH domain. H1000 (proton acceptor; for dehydratase activity) is an active-site residue. Residues 1105–1267 (NFTSISKQDF…CALVSLGSNP (163 aa)) are C-terminal hotdog fold. D1177 (proton donor; for dehydratase activity) is an active-site residue. One can recognise a Carrier domain in the interval 2524–2601 (ANNEIIHSTI…QSIEIIKSAK (78 aa)). At S2561 the chain carries O-(pantetheine 4'-phosphoryl)serine. The tract at residues 2600–2623 (AKNNNKNNNNNNNKNNSNNKNKNN) is disordered. Residues 2601-2623 (KNNNKNNNNNNNKNNSNNKNKNN) show a composition bias toward low complexity.

It depends on pantetheine 4'-phosphate as a cofactor.

Its function is as follows. Probable polyketide synthase. This Dictyostelium discoideum (Social amoeba) protein is Probable polyketide synthase 31 (pks31).